Consider the following 128-residue polypeptide: Large ribosomal subunit protein bL19 (128 aa).

It belongs to the bacterial ribosomal protein bL19 family.

Its function is as follows. This protein is located at the 30S-50S ribosomal subunit interface and may play a role in the structure and function of the aminoacyl-tRNA binding site. In Paracidovorax citrulli (strain AAC00-1) (Acidovorax citrulli), this protein is Large ribosomal subunit protein bL19.